Here is a 399-residue protein sequence, read N- to C-terminus: MSSSVSSVRLPLRAAPPLYGRREWRADGARAPSPALVAVKPLSCRAPASYRSALLLHRRRRYALPPVAATATSKPVLKDPKKYQEWDSLTAKFAGAANVPFLLLQLPQIILNARNLLAGNKTALFAVPWLGMLTGLLGNLSLLSYFAKKKETGAVIVQTLGVISTYVVIAQLAMAESMPLPQFVATSAVVAAGLLLNFLNYFGWLPGTLWLLWEDFITIGGLAVLPQVMWSTFVPFIPNSLLPGIISGSLAATAVVMARMGKLSKGGINFVGSLSGWTATLLFMWMPVAQMWTNYLNPSNIKGLSAFTMLLAMIGNGLMIPRAVFIRDLMWFTGSAWASFLQGWGNLACMYCFDSISRESFLATTFGLLLWLGFTLWRDTIAHGNSSPVTSLKELLFGK.

The transit peptide at 1–67 (MSSSVSSVRL…RRRRYALPPV (67 aa)) directs the protein to the chloroplast. The next 9 helical transmembrane spans lie at 93-113 (FAGA…ILNA), 123-143 (ALFA…LSLL), 154-174 (AVIV…QLAM), 180-202 (LPQF…LNYF), 217-237 (ITIG…VPFI), 238-258 (PNSL…VVMA), 268-288 (INFV…WMPV), 306-326 (AFTM…AVFI), and 361-381 (FLAT…RDTI).

It is found in the plastid. The protein resides in the chloroplast inner membrane. In terms of biological role, probable maltose transporter. Essential for the conversion of starch to sucrose in leaves at night, probably via the export of maltose from the chloroplast. The chain is Maltose excess protein 1-like, chloroplastic from Oryza sativa subsp. japonica (Rice).